Here is a 93-residue protein sequence, read N- to C-terminus: Putative septation protein SpoVG (93 aa).

Belongs to the SpoVG family.

Could be involved in septation. The polypeptide is Putative septation protein SpoVG (Treponema denticola (strain ATCC 35405 / DSM 14222 / CIP 103919 / JCM 8153 / KCTC 15104)).